Reading from the N-terminus, the 392-residue chain is Formate-dependent phosphoribosylglycinamide formyltransferase (392 aa).

Residues 22 to 23 and Glu-82 contribute to the N(1)-(5-phospho-beta-D-ribosyl)glycinamide site; that span reads EL. ATP-binding positions include Arg-114, Lys-155, 160-165, 195-198, and Glu-203; these read SSGKGQ and EGEV. The region spanning 119-308 is the ATP-grasp domain; that stretch reads RLAAETLALP…EFALHVRAFL (190 aa). Residues Glu-267 and Glu-279 each coordinate Mg(2+). N(1)-(5-phospho-beta-D-ribosyl)glycinamide-binding positions include Asp-286, Lys-355, and 362–363; that span reads RR.

Belongs to the PurK/PurT family. As to quaternary structure, homodimer.

The catalysed reaction is N(1)-(5-phospho-beta-D-ribosyl)glycinamide + formate + ATP = N(2)-formyl-N(1)-(5-phospho-beta-D-ribosyl)glycinamide + ADP + phosphate + H(+). It functions in the pathway purine metabolism; IMP biosynthesis via de novo pathway; N(2)-formyl-N(1)-(5-phospho-D-ribosyl)glycinamide from N(1)-(5-phospho-D-ribosyl)glycinamide (formate route): step 1/1. Functionally, involved in the de novo purine biosynthesis. Catalyzes the transfer of formate to 5-phospho-ribosyl-glycinamide (GAR), producing 5-phospho-ribosyl-N-formylglycinamide (FGAR). Formate is provided by PurU via hydrolysis of 10-formyl-tetrahydrofolate. The sequence is that of Formate-dependent phosphoribosylglycinamide formyltransferase from Edwardsiella ictaluri (strain 93-146).